Consider the following 491-residue polypeptide: Glucose-6-phosphate 1-dehydrogenase (491 aa).

NADP(+) is bound by residues arginine 49, aspartate 91–valine 92, and lysine 146. Substrate is bound by residues histidine 176, lysine 180, glutamate 214, and aspartate 233. Residue histidine 238 is the Proton acceptor of the active site. Substrate contacts are provided by lysine 338 and lysine 343.

The protein belongs to the glucose-6-phosphate dehydrogenase family.

The catalysed reaction is D-glucose 6-phosphate + NADP(+) = 6-phospho-D-glucono-1,5-lactone + NADPH + H(+). It functions in the pathway carbohydrate degradation; pentose phosphate pathway; D-ribulose 5-phosphate from D-glucose 6-phosphate (oxidative stage): step 1/3. Its function is as follows. Catalyzes the oxidation of glucose 6-phosphate to 6-phosphogluconolactone. The polypeptide is Glucose-6-phosphate 1-dehydrogenase (Buchnera aphidicola subsp. Acyrthosiphon pisum (strain APS) (Acyrthosiphon pisum symbiotic bacterium)).